Here is a 433-residue protein sequence, read N- to C-terminus: UPF0597 protein Spea_0809 (433 aa).

This sequence belongs to the UPF0597 family.

In Shewanella pealeana (strain ATCC 700345 / ANG-SQ1), this protein is UPF0597 protein Spea_0809.